Reading from the N-terminus, the 202-residue chain is Imidazole glycerol phosphate synthase subunit HisH (202 aa).

Positions 3–202 (RIVIIDYGLG…KILKNFVEMC (200 aa)) constitute a Glutamine amidotransferase type-1 domain. C79 functions as the Nucleophile in the catalytic mechanism. Residues H183 and E185 contribute to the active site.

As to quaternary structure, heterodimer of HisH and HisF.

The protein localises to the cytoplasm. The catalysed reaction is 5-[(5-phospho-1-deoxy-D-ribulos-1-ylimino)methylamino]-1-(5-phospho-beta-D-ribosyl)imidazole-4-carboxamide + L-glutamine = D-erythro-1-(imidazol-4-yl)glycerol 3-phosphate + 5-amino-1-(5-phospho-beta-D-ribosyl)imidazole-4-carboxamide + L-glutamate + H(+). It catalyses the reaction L-glutamine + H2O = L-glutamate + NH4(+). Its pathway is amino-acid biosynthesis; L-histidine biosynthesis; L-histidine from 5-phospho-alpha-D-ribose 1-diphosphate: step 5/9. In terms of biological role, IGPS catalyzes the conversion of PRFAR and glutamine to IGP, AICAR and glutamate. The HisH subunit catalyzes the hydrolysis of glutamine to glutamate and ammonia as part of the synthesis of IGP and AICAR. The resulting ammonia molecule is channeled to the active site of HisF. The chain is Imidazole glycerol phosphate synthase subunit HisH from Methanosarcina acetivorans (strain ATCC 35395 / DSM 2834 / JCM 12185 / C2A).